The chain runs to 65 residues: Large ribosomal subunit protein bL35 (65 aa).

Belongs to the bacterial ribosomal protein bL35 family.

The sequence is that of Large ribosomal subunit protein bL35 from Borrelia turicatae (strain 91E135).